Here is a 206-residue protein sequence, read N- to C-terminus: Large ribosomal subunit protein uL4 (206 aa).

The disordered stretch occupies residues 51–76; it reads AKTRAEVSGGGIKPWRQKGTGRARQG.

This sequence belongs to the universal ribosomal protein uL4 family. Part of the 50S ribosomal subunit.

Its function is as follows. One of the primary rRNA binding proteins, this protein initially binds near the 5'-end of the 23S rRNA. It is important during the early stages of 50S assembly. It makes multiple contacts with different domains of the 23S rRNA in the assembled 50S subunit and ribosome. In terms of biological role, forms part of the polypeptide exit tunnel. In Clostridium kluyveri (strain ATCC 8527 / DSM 555 / NBRC 12016 / NCIMB 10680 / K1), this protein is Large ribosomal subunit protein uL4.